The following is a 139-amino-acid chain: Large ribosomal subunit protein uL16 (139 aa).

Belongs to the universal ribosomal protein uL16 family. In terms of assembly, part of the 50S ribosomal subunit.

Its function is as follows. Binds 23S rRNA and is also seen to make contacts with the A and possibly P site tRNAs. In Chlorobium chlorochromatii (strain CaD3), this protein is Large ribosomal subunit protein uL16.